Reading from the N-terminus, the 302-residue chain is tRNA-cytidine(32) 2-sulfurtransferase (302 aa).

The short motif at 45–50 (SGGKDS) is the PP-loop motif element. Cys120, Cys123, and Cys211 together coordinate [4Fe-4S] cluster.

The protein belongs to the TtcA family. As to quaternary structure, homodimer. Mg(2+) serves as cofactor. It depends on [4Fe-4S] cluster as a cofactor.

It is found in the cytoplasm. The catalysed reaction is cytidine(32) in tRNA + S-sulfanyl-L-cysteinyl-[cysteine desulfurase] + AH2 + ATP = 2-thiocytidine(32) in tRNA + L-cysteinyl-[cysteine desulfurase] + A + AMP + diphosphate + H(+). The protein operates within tRNA modification. Catalyzes the ATP-dependent 2-thiolation of cytidine in position 32 of tRNA, to form 2-thiocytidine (s(2)C32). The sulfur atoms are provided by the cysteine/cysteine desulfurase (IscS) system. This is tRNA-cytidine(32) 2-sulfurtransferase from Cellvibrio japonicus (strain Ueda107) (Pseudomonas fluorescens subsp. cellulosa).